The primary structure comprises 854 residues: Valine--tRNA ligase (854 aa).

Residues 46-56 (PTVSGDLHIGH) carry the 'HIGH' region motif. The short motif at 551–555 (KMSKS) is the 'KMSKS' region element. ATP is bound at residue lysine 554.

Belongs to the class-I aminoacyl-tRNA synthetase family. ValS type 2 subfamily. In terms of assembly, monomer.

The protein localises to the cytoplasm. It carries out the reaction tRNA(Val) + L-valine + ATP = L-valyl-tRNA(Val) + AMP + diphosphate. Functionally, catalyzes the attachment of valine to tRNA(Val). As ValRS can inadvertently accommodate and process structurally similar amino acids such as threonine, to avoid such errors, it has a 'posttransfer' editing activity that hydrolyzes mischarged Thr-tRNA(Val) in a tRNA-dependent manner. This chain is Valine--tRNA ligase, found in Orientia tsutsugamushi (strain Boryong) (Rickettsia tsutsugamushi).